The chain runs to 49 residues: Large ribosomal subunit protein bL33C (49 aa).

Belongs to the bacterial ribosomal protein bL33 family.

The polypeptide is Large ribosomal subunit protein bL33C (Bacillus pumilus (strain SAFR-032)).